Here is a 562-residue protein sequence, read N- to C-terminus: MOB kinase activator-like 2 (562 aa).

The interval 30–50 is disordered; the sequence is KSGSVQGTTATATATGPPSPP. Low complexity predominate over residues 31–45; that stretch reads SGSVQGTTATATATG. Positions 170, 175, 250, and 255 each coordinate Zn(2+). Disordered regions lie at residues 304-378, 468-523, and 538-562; these read DDTS…TASA, NFSN…STTV, and GASA…SSTA. Low complexity-rich tracts occupy residues 305–349, 357–378, and 471–481; these read DTSG…NSTS, NSQS…TASA, and NNNNNNHNLNH. Positions 482 to 514 are enriched in basic residues; the sequence is LNHHHHHHHHQHHHQHHPHGHHGHQGHQGHQGH. Residues 547–562 are compositionally biased toward low complexity; sequence AVSAATGGATSASSTA.

Belongs to the MOB1/phocein family. As to quaternary structure, interacts with and activates trc, also interacts with wts.

Its subcellular location is the cytoplasm. The protein localises to the nucleus. Its function is as follows. Required for the normal morphogenesis of a variety of polarized outgrowths including epidermal hairs, bristles, arista laterals, and dendrites. This is MOB kinase activator-like 2 from Drosophila pseudoobscura pseudoobscura (Fruit fly).